A 314-amino-acid polypeptide reads, in one-letter code: Homoserine O-succinyltransferase (314 aa).

The active-site Acyl-thioester intermediate is the cysteine 142. Positions 163 and 192 each coordinate substrate. Histidine 235 serves as the catalytic Proton acceptor. The active site involves glutamate 237. Residue arginine 249 coordinates substrate.

This sequence belongs to the MetA family.

Its subcellular location is the cytoplasm. It catalyses the reaction L-homoserine + succinyl-CoA = O-succinyl-L-homoserine + CoA. The protein operates within amino-acid biosynthesis; L-methionine biosynthesis via de novo pathway; O-succinyl-L-homoserine from L-homoserine: step 1/1. In terms of biological role, transfers a succinyl group from succinyl-CoA to L-homoserine, forming succinyl-L-homoserine. In Photobacterium profundum (strain SS9), this protein is Homoserine O-succinyltransferase.